The sequence spans 891 residues: Targeting protein for Xklp2 homolog (891 aa).

Basic and acidic residues predominate over residues 42 to 54 (HENGVPLTFDDKA). Disordered stretches follow at residues 42–310 (HENG…KSCP), 418–454 (NLRK…SFSG), 472–518 (HTKT…NRHR), 723–746 (CSGV…AEKG), and 789–891 (STKP…SHTS). Positions 108–124 (DDVSSAESETCEMSTDS) are enriched in polar residues. Positions 141–154 (DDEATVQESSDAEE) are enriched in acidic residues. Residues 155 to 173 (TQTLPSSCVDSSTAEMSTD) show a composition bias toward polar residues. A compositionally biased stretch (basic residues) spans 236–246 (PTRKSPRLHSR). The span at 442–454 (DNRKRTHEESFSG) shows a compositional bias: basic and acidic residues. Polar residues predominate over residues 791–802 (KPMTDISNFSLN). 2 stretches are compositionally biased toward basic and acidic residues: residues 803-822 (TERR…ERQL) and 831-852 (REAE…DSIH).

Belongs to the TPX2 family. In terms of tissue distribution, detectable in immature oocytes.

It localises to the nucleus. Its subcellular location is the cytoplasm. The protein resides in the cytoskeleton. It is found in the spindle. Functionally, spindle assembly factor. Required for normal assembly of mitotic spindles. The polypeptide is Targeting protein for Xklp2 homolog (Patiria pectinifera (Starfish)).